Consider the following 158-residue polypeptide: UPF0178 protein RPA2191 (158 aa).

The protein belongs to the UPF0178 family.

The sequence is that of UPF0178 protein RPA2191 from Rhodopseudomonas palustris (strain ATCC BAA-98 / CGA009).